The primary structure comprises 253 residues: Triosephosphate isomerase (253 aa).

8-10 (NWK) lines the substrate pocket. Residue His-93 is the Electrophile of the active site. Residue Glu-165 is the Proton acceptor of the active site. Residues Gly-171, Ser-210, and 231–232 (GG) contribute to the substrate site.

The protein belongs to the triosephosphate isomerase family. As to quaternary structure, homodimer.

Its subcellular location is the cytoplasm. The catalysed reaction is D-glyceraldehyde 3-phosphate = dihydroxyacetone phosphate. It functions in the pathway carbohydrate biosynthesis; gluconeogenesis. Its pathway is carbohydrate degradation; glycolysis; D-glyceraldehyde 3-phosphate from glycerone phosphate: step 1/1. Involved in the gluconeogenesis. Catalyzes stereospecifically the conversion of dihydroxyacetone phosphate (DHAP) to D-glyceraldehyde-3-phosphate (G3P). The protein is Triosephosphate isomerase of Francisella philomiragia subsp. philomiragia (strain ATCC 25017 / CCUG 19701 / FSC 153 / O#319-036).